A 479-amino-acid polypeptide reads, in one-letter code: Aspartyl/glutamyl-tRNA(Asn/Gln) amidotransferase subunit B (479 aa).

The protein belongs to the GatB/GatE family. GatB subfamily. As to quaternary structure, heterotrimer of A, B and C subunits.

It catalyses the reaction L-glutamyl-tRNA(Gln) + L-glutamine + ATP + H2O = L-glutaminyl-tRNA(Gln) + L-glutamate + ADP + phosphate + H(+). It carries out the reaction L-aspartyl-tRNA(Asn) + L-glutamine + ATP + H2O = L-asparaginyl-tRNA(Asn) + L-glutamate + ADP + phosphate + 2 H(+). In terms of biological role, allows the formation of correctly charged Asn-tRNA(Asn) or Gln-tRNA(Gln) through the transamidation of misacylated Asp-tRNA(Asn) or Glu-tRNA(Gln) in organisms which lack either or both of asparaginyl-tRNA or glutaminyl-tRNA synthetases. The reaction takes place in the presence of glutamine and ATP through an activated phospho-Asp-tRNA(Asn) or phospho-Glu-tRNA(Gln). The protein is Aspartyl/glutamyl-tRNA(Asn/Gln) amidotransferase subunit B of Streptococcus pyogenes serotype M1.